The chain runs to 267 residues: MEGSVGKVGGLGRTLCVLTGASRGFGRTLAQVLAPLMSPRSVLVLSARNDEALRQLETELGAEWPGLRIVRVPADLGAETGLQQLVGALCDLPRPEGLQRVLLINNAGTLGDVSKRWVDLTDPTEVNNYWTLNLTSTLCLTSSILQAFPDSPGLSRTVVNISSICALQPFKGWGLYCAGKAARNMMFQVLAAEEPSVRVLSYGPGPLDTDMQQLARETSVDPDLRKSLQELKRKGELVDCKISAQKLLSLLQNDKFESGAHIDFYDE.

An N-acetylmethionine modification is found at M1. 20-26 lines the NADP(+) pocket; it reads GASRGFG. At S38 the chain carries Phosphoserine. NADP(+) contacts are provided by residues 48 to 49 and 75 to 76; these read RN and DL. Residues 163–164 and Y176 contribute to the substrate site; that span reads SI. K180 provides a ligand contact to NADP(+). S201 is modified (phosphoserine). G205 contacts substrate. Residue 207 to 212 participates in NADP(+) binding; sequence LDTDMQ. S219 is subject to Phosphoserine. Position 263 (D263) interacts with substrate.

It belongs to the sepiapterin reductase family. In terms of assembly, homodimer.

It is found in the cytoplasm. The catalysed reaction is L-erythro-7,8-dihydrobiopterin + NADP(+) = L-sepiapterin + NADPH + H(+). It catalyses the reaction (6R)-L-erythro-5,6,7,8-tetrahydrobiopterin + 2 NADP(+) = 6-pyruvoyl-5,6,7,8-tetrahydropterin + 2 NADPH + 2 H(+). Catalyzes the final one or two reductions in tetra-hydrobiopterin biosynthesis to form 5,6,7,8-tetrahydrobiopterin. This is Sepiapterin reductase (SPR) from Bos taurus (Bovine).